Here is a 432-residue protein sequence, read N- to C-terminus: RING finger protein 44 (432 aa).

Residues M1 to A86 are disordered. Positions Q56–L65 are enriched in pro residues. Residues C380–R421 form an RING-type; atypical zinc finger.

This Homo sapiens (Human) protein is RING finger protein 44 (RNF44).